A 430-amino-acid polypeptide reads, in one-letter code: Pre-B-cell leukemia transcription factor 2 (430 aa).

Positions 1–52 (MDERLLGPPPPGGGRGGLGLVGAEPGGPGEPPGGGDPGGGSGGVPGGRGKQD) are disordered. Residues 13–48 (GGRGGLGLVGAEPGGPGEPPGGGDPGGGSGGVPGGR) show a composition bias toward gly residues. Residues 48–243 (RGKQDIGDIL…VMILRSRFLD (196 aa)) form the PBC domain. Positions 55-134 (DILQQIMTIT…EGVAGPEKGG (80 aa)) are PBC-A. 3 positions are modified to phosphoserine: Ser136, Ser151, and Ser159. Residues 137 to 243 (AAAAAAAAAS…VMILRSRFLD (107 aa)) are PBC-B. A DNA-binding region (homeobox; TALE-type) is located at residues 244-306 (ARRKRRNFSK…NKRIRYKKNI (63 aa)). Disordered stretches follow at residues 327–347 (GGHS…GGSF) and 375–430 (LRHS…DTSN). Residues Ser330 and Ser395 each carry the phosphoserine modification. Residues 409–418 (VTPSSVTSPT) show a composition bias toward polar residues.

This sequence belongs to the TALE/PBX homeobox family. Forms heterodimers with MEIS1 and heterotrimers with MEIS1 and HOXA9. Interacts with PBXIP1.

The protein resides in the nucleus. Functionally, transcriptional activator that binds the sequence 5'-ATCAATCAA-3'. Activates transcription of PF4 in complex with MEIS1. This chain is Pre-B-cell leukemia transcription factor 2 (Pbx2), found in Mus musculus (Mouse).